The primary structure comprises 233 residues: Chaperone protein MrkB (233 aa).

Residues 1 to 18 form the signal peptide; that stretch reads MKRIALFFCFIFSFAAHA.

The protein belongs to the periplasmic pilus chaperone family.

It localises to the periplasm. Mediates assembly of pili by forming soluble multimeric complexes with pili subunits as an intermediate step in the assembly process. This protein is involved in type 3 pili assembly. In Klebsiella pneumoniae, this protein is Chaperone protein MrkB (mrkB).